A 301-amino-acid chain; its full sequence is MTEARLTHLKQLEAESIHIIREVAAEFDNPVMLYSIGKDSAVMLHLAMKAFYPGKPPFPLMHVDTGWKFKEMITFRDEMVSKLGLELIVHQNQEGVEQGIGPFTHGSSKHTDVMKTQGLKQALDKYGFDAAFGGARRDEEKSRAKERVYSFRDKQHRWDPKNQRPELWNIYNGKVNKGESIRVFPLSNWTELDIWQYIYLESIPIVPLYFSEKRPVVERDGTLIMVDDERMPLNGEVPEMKSVRFRTLGCYPLTGAVESEAATLPEIIQEMLLTKSSERQGRMIDHDSSGSMEEKKKQGYF.

The interval 279–301 is disordered; the sequence is RQGRMIDHDSSGSMEEKKKQGYF.

The protein belongs to the PAPS reductase family. CysD subfamily. As to quaternary structure, heterodimer composed of CysD, the smaller subunit, and CysN.

It carries out the reaction sulfate + ATP + H(+) = adenosine 5'-phosphosulfate + diphosphate. It participates in sulfur metabolism; hydrogen sulfide biosynthesis; sulfite from sulfate: step 1/3. With CysN forms the ATP sulfurylase (ATPS) that catalyzes the adenylation of sulfate producing adenosine 5'-phosphosulfate (APS) and diphosphate, the first enzymatic step in sulfur assimilation pathway. APS synthesis involves the formation of a high-energy phosphoric-sulfuric acid anhydride bond driven by GTP hydrolysis by CysN coupled to ATP hydrolysis by CysD. This is Sulfate adenylyltransferase subunit 2 from Marinomonas sp. (strain MWYL1).